The following is a 620-amino-acid chain: Palmitoyltransferase ZDHHC17 (620 aa).

At 1–292 (MADALVGYEK…LKMDKEFRQK (292 aa)) the chain is on the cytoplasmic side. ANK repeat units lie at residues 77–106 (ENVTLLHWAAINNRVDLVKYYISKGAIVDQ), 111–140 (LNSTPLHWATRQGHLSMVVQLMKYGADPSL), 144–173 (EGCSCVHLAAQFGHTSIVAYLIAKGQDVDM), 177–207 (NGMTPLMWAAYRTHSVDPTRLLLTFNVSVNL), 212–241 (HKNTALHWAVLAGNTTVISLLLEANANVDA), and 245–274 (KGETPLDLAKQRKNVWMINHLQEARQAKGY). 2 consecutive transmembrane segments (helical) span residues 293 to 313 (VMLGTPFLVIWLVGFIADLDI) and 314 to 334 (DSWLIKGVMYAVMWLVVQFLS). At 335-345 (KSFFDHSMHSA) the chain is on the cytoplasmic side. A helical membrane pass occupies residues 346–366 (LPLGIYLATKFWMYITWFYWF). Topologically, residues 367–369 (WND) are lumenal. A helical transmembrane segment spans residues 370–390 (LPFVTIHLPFLLNSLALFYNF). The Cytoplasmic segment spans residues 391–469 (GKSWKSDPGI…NCVGSGNHRY (79 aa)). The DHHC domain maps to 425–475 (IFCSTCLIRKPIRSKHCAVCNRCIAKFDHHCPWVGNCVGSGNHRYFMGYLF). Residue Cys455 is the S-palmitoyl cysteine intermediate of the active site. The helical transmembrane segment at 470 to 490 (FMGYLFFLLCMICWMMYGCIC) threads the bilayer. Residues 491 to 504 (YWRIHCATSYTKDG) lie on the Lumenal side of the membrane. A helical transmembrane segment spans residues 505–524 (FWIYITQIATCSPWMFWMFL). The Cytoplasmic segment spans residues 525–620 (NSVFHFMWVA…QTSGSGYQLV (96 aa)).

It belongs to the DHHC palmitoyltransferase family. AKR/ZDHHC17 subfamily. Post-translationally, autopalmitoylated.

Its subcellular location is the golgi apparatus membrane. It is found in the cytoplasmic vesicle membrane. It localises to the presynaptic cell membrane. It catalyses the reaction L-cysteinyl-[protein] + hexadecanoyl-CoA = S-hexadecanoyl-L-cysteinyl-[protein] + CoA. It carries out the reaction L-cysteinyl-[protein] + tetradecanoyl-CoA = S-tetradecanoyl-L-cysteinyl-[protein] + CoA. The catalysed reaction is L-cysteinyl-[protein] + octadecanoyl-CoA = S-octadecanoyl-L-cysteinyl-[protein] + CoA. Functionally, palmitoyltransferase that catalyzes the addition of palmitate onto various protein substrates and is involved in a variety of cellular processes. Has no stringent fatty acid selectivity and in addition to palmitate can also transfer onto target proteins myristate from tetradecanoyl-CoA and stearate from octadecanoyl-CoA. Plays a role in axonogenesis. The sequence is that of Palmitoyltransferase ZDHHC17 from Danio rerio (Zebrafish).